The primary structure comprises 347 residues: S-adenosylmethionine:tRNA ribosyltransferase-isomerase (347 aa).

This sequence belongs to the QueA family. As to quaternary structure, monomer.

It is found in the cytoplasm. It catalyses the reaction 7-aminomethyl-7-carbaguanosine(34) in tRNA + S-adenosyl-L-methionine = epoxyqueuosine(34) in tRNA + adenine + L-methionine + 2 H(+). Its pathway is tRNA modification; tRNA-queuosine biosynthesis. Its function is as follows. Transfers and isomerizes the ribose moiety from AdoMet to the 7-aminomethyl group of 7-deazaguanine (preQ1-tRNA) to give epoxyqueuosine (oQ-tRNA). This chain is S-adenosylmethionine:tRNA ribosyltransferase-isomerase, found in Erythrobacter litoralis (strain HTCC2594).